The following is a 375-amino-acid chain: Chanoclavine-I aldehyde reductase ifgG (375 aa).

FMN is bound by residues 31-33, Ala66, Gln108, and His176; that span reads PTT. His176 and Asn179 together coordinate substrate. The active-site Proton donor is the Tyr181. Residues Lys228, Gly300, 325–326, and Arg326 contribute to the FMN site; that span reads GR. Tyr353 is a substrate binding site.

Belongs to the NADH:flavin oxidoreductase/NADH oxidase family. The cofactor is FMN.

It catalyses the reaction dihydrochanoclavine-I aldehyde + NADP(+) = chanoclavine-I aldehyde + NADPH + H(+). Its pathway is alkaloid biosynthesis; ergot alkaloid biosynthesis. In terms of biological role, chanoclavine-I aldehyde reductase; part of the gene cluster that mediates the biosynthesis of isofumigaclavines, fungal ergot alkaloids. The tryptophan dimethylallyltransferase ifgA catalyzes the first step of ergot alkaloid biosynthesis by condensing dimethylallyl diphosphate (DMAP) and tryptophan to form 4-dimethylallyl-L-tryptophan. The second step is catalyzed by the methyltransferase ifgB that methylates 4-dimethylallyl-L-tryptophan in the presence of S-adenosyl-L-methionine, resulting in the formation of N-methyl-dimethylallyl-L-tryptophan. The catalase ifgD and the FAD-dependent oxidoreductase ifgC then transform N-methyl-dimethylallyl-L-tryptophan to chanoclavine-I which is further oxidized by ifgE in the presence of NAD(+), resulting in the formation of chanoclavine-I aldehyde. The chanoclavine-I aldehyde reductases ifgG and/or fgaOx3 reduce chanoclavine-I aldehyde to dihydrochanoclavine-I aldehyde that spontaneously dehydrates to form 6,8-dimethyl-6,7-didehydroergoline. The festuclavine dehydrogenases ifgF1 and/or ifgF2 then catalyze the reduction of 6,8-dimethyl-6,7-didehydroergoline to form festuclavine. Hydrolysis of festuclavine by a yet undetermined cytochrome P450 monooxygenase (called ifgH) then leads to the formation of isofumigaclavine B which is in turn acetylated by ifgI to isofumigaclavine A. Penicillium roqueforti has interestingly at least two sets of genes for the consumption of chanoclavine-I aldehyde on three different loci, the OYEs ifgG/fgaOx3 and the festuclavine synthase homologs ifgF1/ifgF2. The reason for the duplication of these genes is unclear, probably to ensure the conversion of chanoclavine-I aldehyde by differential gene expression under various environmental conditions. This is Chanoclavine-I aldehyde reductase ifgG from Penicillium roqueforti (strain FM164).